A 305-amino-acid chain; its full sequence is Small ribosomal subunit protein uS3 (305 aa).

Positions 17 to 86 (IDEFFSEELS…DPQVDVQEVD (70 aa)) constitute a KH type-2 domain. Acidic residues-rich tracts occupy residues 207–262 (EPEG…EAET) and 272–305 (AAEEPDEALDEDVEAEAEELLDEMEDETTDEEET). Residues 207–305 (EPEGDVEELL…EDETTDEEET (99 aa)) form a disordered region.

The protein belongs to the universal ribosomal protein uS3 family. In terms of assembly, part of the 30S ribosomal subunit.

Functionally, binds the lower part of the 30S subunit head. The protein is Small ribosomal subunit protein uS3 of Natronomonas pharaonis (strain ATCC 35678 / DSM 2160 / CIP 103997 / JCM 8858 / NBRC 14720 / NCIMB 2260 / Gabara) (Halobacterium pharaonis).